The primary structure comprises 172 residues: MNVPVPPPPDGVLTGPSDSLEAGEPTPGLSDRSPDEGLIEDLALEDRAVEHLVGGLLSHYLPDLQRSKRALQELTQNQVVLLDTLEQEISKFKECHSMLDINALFTEAKHYHAKLVTIRKEMLLLHEKTSKLKKRALKLQQQRQKEELEREQQREREFEREKQLTAKPAKRT.

Pro residues predominate over residues 1-10 (MNVPVPPPPD). Disordered regions lie at residues 1–35 (MNVP…RSPD) and 136–172 (ALKL…AKRT). Over residues 143–164 (RQKEELEREQQREREFEREKQL) the composition is skewed to basic and acidic residues.

The protein belongs to the BLOC1S6 family. In terms of assembly, homodimer. Octamer composed of one copy each BLOC1S1, BLOC1S2, BLOC1S3, BLOC1S4, BLOC1S5, BLOC1S6, DTNBP1/BLOC1S7 and SNAPIN/BLOC1S8. The BLOC-1 complex associates with the AP-3 protein complex and membrane protein cargos. Interacts with BLOC1S4, BLOC1S5, DTNBP1/BLOC1S7, F-actin, SNAP25 isoform 1 and isoform 2, SNAP47 and STX12. Component of the biogenesis of lysosome-related organelles complex 1 (BLOC-1) composed of BLOC1S1, BLOC1S2, BLOC1S3, BLOC1S4, BLOC1S5, BLOC1S6, DTNBP1/BLOC1S7 and SNAPIN/BLOC1S8.

It localises to the cytoplasm. The protein localises to the membrane. In terms of biological role, component of the BLOC-1 complex, a complex that is required for normal biogenesis of lysosome-related organelles (LRO), such as platelet dense granules and melanosomes. In concert with the AP-3 complex, the BLOC-1 complex is required to target membrane protein cargos into vesicles assembled at cell bodies for delivery into neurites and nerve terminals. The BLOC-1 complex, in association with SNARE proteins, is also proposed to be involved in neurite extension. May play a role in intracellular vesicle trafficking, particularly in the vesicle-docking and fusion process. This is Biogenesis of lysosome-related organelles complex 1 subunit 6 (Bloc1s6) from Rattus norvegicus (Rat).